We begin with the raw amino-acid sequence, 175 residues long: Methylated-DNA--protein-cysteine methyltransferase (175 aa).

Cys142 serves as the catalytic Nucleophile; methyl group acceptor.

It belongs to the MGMT family.

The protein localises to the cytoplasm. The catalysed reaction is a 6-O-methyl-2'-deoxyguanosine in DNA + L-cysteinyl-[protein] = S-methyl-L-cysteinyl-[protein] + a 2'-deoxyguanosine in DNA. The enzyme catalyses a 4-O-methyl-thymidine in DNA + L-cysteinyl-[protein] = a thymidine in DNA + S-methyl-L-cysteinyl-[protein]. In terms of biological role, involved in the cellular defense against the biological effects of O6-methylguanine (O6-MeG) and O4-methylthymine (O4-MeT) in DNA. Repairs the methylated nucleobase in DNA by stoichiometrically transferring the methyl group to a cysteine residue in the enzyme. This is a suicide reaction: the enzyme is irreversibly inactivated. The chain is Methylated-DNA--protein-cysteine methyltransferase from Thermococcus sibiricus (strain DSM 12597 / MM 739).